A 56-amino-acid chain; its full sequence is Large ribosomal subunit protein bL33 (56 aa).

Positions 1–12 are enriched in basic and acidic residues; it reads MATKGGRDKIKL. The segment at 1-24 is disordered; that stretch reads MATKGGRDKIKLESTAGTGHFYTT. Over residues 15 to 24 the composition is skewed to polar residues; sequence TAGTGHFYTT.

The protein belongs to the bacterial ribosomal protein bL33 family.

In Paracidovorax citrulli (strain AAC00-1) (Acidovorax citrulli), this protein is Large ribosomal subunit protein bL33.